The primary structure comprises 242 residues: 1-(5-phosphoribosyl)-5-[(5-phosphoribosylamino)methylideneamino] imidazole-4-carboxamide isomerase (242 aa).

The Proton acceptor role is filled by Asp-8. Asp-129 (proton donor) is an active-site residue.

Belongs to the HisA/HisF family.

The protein localises to the cytoplasm. It carries out the reaction 1-(5-phospho-beta-D-ribosyl)-5-[(5-phospho-beta-D-ribosylamino)methylideneamino]imidazole-4-carboxamide = 5-[(5-phospho-1-deoxy-D-ribulos-1-ylimino)methylamino]-1-(5-phospho-beta-D-ribosyl)imidazole-4-carboxamide. The protein operates within amino-acid biosynthesis; L-histidine biosynthesis; L-histidine from 5-phospho-alpha-D-ribose 1-diphosphate: step 4/9. The polypeptide is 1-(5-phosphoribosyl)-5-[(5-phosphoribosylamino)methylideneamino] imidazole-4-carboxamide isomerase (Clostridium botulinum (strain Kyoto / Type A2)).